Consider the following 259-residue polypeptide: Protein snail homolog Sna (259 aa).

The interval M1–S20 is SNAG domain. A disordered region spans residues D71–A113. C2H2-type zinc fingers lie at residues F119–H141, F150–H172, C176–H198, F204–H226, and Y232–C255.

It belongs to the snail C2H2-type zinc-finger protein family. In terms of assembly, interacts (via SNAG domain) with limd1 (via LIM domains), wtip (via LIM domains) and ajuba (via LIM domains). Interacts with elp3; the interaction inhibits snai1 ubiquitination and promotes snai1 stability. In terms of processing, ubiquitinated. Maternal expression is nearly completely restricted to the vegetal hemisphere. Zygotic expression begins in the dorsal marginal zone just before gastrulation (stage 9), and is almost completely absent in the animal hemisphere. At mid-gastrula (stage 11-11.5), expression begins in the ectoderm in an arc surrounding the prospective neural plate. From stage 12, anterior expression is down-regulated, while levels are increased in the prospective neural crest.

Its subcellular location is the nucleus. Transcriptional repressor. Acts upstream of snai2/slug, zic5 and other neural crest markers in the specification of the neural crest and neural crest migration. Involved in embryonic mesoderm formation. This is Protein snail homolog Sna (snai1) from Xenopus laevis (African clawed frog).